Reading from the N-terminus, the 475-residue chain is Ankyrin repeat, SAM and basic leucine zipper domain-containing protein 1 (475 aa).

Residues 1 to 25 form a disordered region; the sequence is MAAGALRGLPVAGGGESSESEDDGW. A phosphoserine mark is found at Ser17, Ser18, and Ser20. ANK repeat units follow at residues 45–74, 78–107, 110–144, 148–177, 181–210, and 214–243; these read EKKEKFKKAMTIGDVSLVQELLDSGISVDS, YGWTPLMYAASVANAELVRVLLDRGANASF, DKQTILITACSAHGSEEQILKCVELLLSRNADPNV, RLMTPIMYAARDGHTQVVALLVAHGAEVNT, NGYTALTWAARQGHKNIVLKLLELGANKML, and DGKMPSEIAKRNKHHEIFNLLSFTLNPLEG. The SAM domain occupies 272 to 334; sequence SYTAFGDLEV…KILAALKELQ (63 aa).

Interacts with DDX4, PIWIL1, RANBP9 and TDRD1.

It localises to the cytoplasm. Its function is as follows. Plays a central role during spermatogenesis by repressing transposable elements and preventing their mobilization, which is essential for the germline integrity. Acts via the piRNA metabolic process, which mediates the repression of transposable elements during meiosis by forming complexes composed of piRNAs and Piwi proteins and governs the methylation and subsequent repression of transposons. Its association with pi-bodies suggests a participation in the primary piRNAs metabolic process. Required prior to the pachytene stage to facilitate the production of multiple types of piRNAs, including those associated with repeats involved in the regulation of retrotransposons. May act by mediating protein-protein interactions during germ cell maturation. The polypeptide is Ankyrin repeat, SAM and basic leucine zipper domain-containing protein 1 (ASZ1) (Papio anubis (Olive baboon)).